Consider the following 156-residue polypeptide: ATP synthase subunit b (156 aa).

Residues 7-29 (LLGQAIAFALFVWFCMKYVWPPI) traverse the membrane as a helical segment.

It belongs to the ATPase B chain family. In terms of assembly, F-type ATPases have 2 components, F(1) - the catalytic core - and F(0) - the membrane proton channel. F(1) has five subunits: alpha(3), beta(3), gamma(1), delta(1), epsilon(1). F(0) has three main subunits: a(1), b(2) and c(10-14). The alpha and beta chains form an alternating ring which encloses part of the gamma chain. F(1) is attached to F(0) by a central stalk formed by the gamma and epsilon chains, while a peripheral stalk is formed by the delta and b chains.

The protein resides in the cell inner membrane. In terms of biological role, f(1)F(0) ATP synthase produces ATP from ADP in the presence of a proton or sodium gradient. F-type ATPases consist of two structural domains, F(1) containing the extramembraneous catalytic core and F(0) containing the membrane proton channel, linked together by a central stalk and a peripheral stalk. During catalysis, ATP synthesis in the catalytic domain of F(1) is coupled via a rotary mechanism of the central stalk subunits to proton translocation. Its function is as follows. Component of the F(0) channel, it forms part of the peripheral stalk, linking F(1) to F(0). The sequence is that of ATP synthase subunit b from Aliivibrio salmonicida (strain LFI1238) (Vibrio salmonicida (strain LFI1238)).